A 564-amino-acid chain; its full sequence is Arginine--tRNA ligase (564 aa).

The 'HIGH' region signature appears at 130–140 (ANPTGSLHIGH).

This sequence belongs to the class-I aminoacyl-tRNA synthetase family. As to quaternary structure, monomer.

The protein resides in the cytoplasm. The catalysed reaction is tRNA(Arg) + L-arginine + ATP = L-arginyl-tRNA(Arg) + AMP + diphosphate. This Malacoplasma penetrans (strain HF-2) (Mycoplasma penetrans) protein is Arginine--tRNA ligase.